The primary structure comprises 290 residues: 4-hydroxybenzoate octaprenyltransferase (290 aa).

Transmembrane regions (helical) follow at residues 23 to 43 (IGAL…TPGV), 46 to 66 (LWIL…GCVV), 99 to 119 (LFVV…TMTI), 141 to 161 (LPQV…FAAV), 163 to 183 (ESVP…AVAY), 213 to 233 (LIIG…GELN), 234 to 254 (GLGW…VYQQ), and 268 to 288 (AFMN…MSYW).

This sequence belongs to the UbiA prenyltransferase family. Mg(2+) serves as cofactor.

The protein resides in the cell inner membrane. It catalyses the reaction all-trans-octaprenyl diphosphate + 4-hydroxybenzoate = 4-hydroxy-3-(all-trans-octaprenyl)benzoate + diphosphate. It participates in cofactor biosynthesis; ubiquinone biosynthesis. In terms of biological role, catalyzes the prenylation of para-hydroxybenzoate (PHB) with an all-trans polyprenyl group. Mediates the second step in the final reaction sequence of ubiquinone-8 (UQ-8) biosynthesis, which is the condensation of the polyisoprenoid side chain with PHB, generating the first membrane-bound Q intermediate 3-octaprenyl-4-hydroxybenzoate. This is 4-hydroxybenzoate octaprenyltransferase from Escherichia coli O6:K15:H31 (strain 536 / UPEC).